We begin with the raw amino-acid sequence, 731 residues long: Pre-B-cell leukemia transcription factor-interacting protein 1 (731 aa).

The span at 1–10 shows a compositional bias: polar residues; it reads MASCPDSDNS. The interval 1–155 is disordered; the sequence is MASCPDSDNS…SSSDDDTDVD (155 aa). S43 is subject to Phosphoserine. 2 stretches are compositionally biased toward polar residues: residues 62–75 and 121–132; these read LFQTESPQSGSILT and LEGQSPPQSLPS. 4 positions are modified to phosphoserine: S129, S146, S147, and S148. T152 bears the Phosphothreonine mark. Residues 270-348 are a coiled coil; it reads LLLDKLAKEN…QGLEADCVRG (79 aa). Disordered regions lie at residues 354–377, 447–572, and 698–731; these read LSGGRGPQGDKAIREQGPREQEPE, GQDP…DPLP, and LKKRSGKKDKHSQSPRAAGPREGHSHSHHHHHRG. The span at 364 to 375 shows a compositional bias: basic and acidic residues; sequence KAIREQGPREQE. A coiled-coil region spans residues 377 to 417; it reads ELSFLKQKEQLEAEAQALRQELERQRRLLGSVQQDLERSLQ. 3 stretches are compositionally biased toward basic and acidic residues: residues 472–499, 508–543, and 551–569; these read WSGKEKWWDGQRDRKAEHWKHKKEESGR, QEDREPAGRWKEGRPRVEESGSKKEGKRQGPKEPPR, and SGEKQKQPRWREGTKDSHD. The short motif at 485 to 505 is the Nuclear localization signal element; that stretch reads RKAEHWKHKKEESGRERKKNW. At S567 the chain carries Phosphoserine. The Nuclear localization signal signature appears at 695–720; the sequence is DKALKKRSGKKDKHSQSPRAAGPREG. Over residues 698–707 the composition is skewed to basic residues; sequence LKKRSGKKDK.

In terms of assembly, interacts with TEX11. Interacts with ESR1, PBX1, PBX2 and PBX3. As to expression, expressed in early hematopoietic precursors.

It localises to the cytoplasm. It is found in the cytoskeleton. The protein resides in the nucleus. Regulator of pre-B-cell leukemia transcription factors (BPXs) function. Inhibits the binding of PBX1-HOX complex to DNA and blocks the transcriptional activity of E2A-PBX1. Tethers estrogen receptor-alpha (ESR1) to microtubules and allows them to influence estrogen receptors-alpha signaling. The polypeptide is Pre-B-cell leukemia transcription factor-interacting protein 1 (PBXIP1) (Homo sapiens (Human)).